The primary structure comprises 421 residues: F-box only protein 5 (421 aa).

Ser-85 carries the phosphoserine modification. The tract at residues 114–219 is interaction with EVI5; sequence ELEASRLYED…IGKKMGLEHL (106 aa). The F-box domain occupies 223 to 273; that stretch reads AELSRRGFVHLLANILTKLSGMDLVNLSKVSRIWKKILENNKGAFQLYSKT. The sufficient for interaction with RPS6KA2; Prevents association of CDC20 with RPS6KA2 stretch occupies residues 236–313; that stretch reads NILTKLSGMD…KSSTWAPPKK (78 aa). Residues 236–383 are requires for efficient binding to CDC20; the sequence is NILTKLSGMD…SCQFEYCTKC (148 aa). The segment at 280 to 421 is inhibits APC ubiquitin ligase activity; it reads SSKLSLHATT…KKSKKNLQRL (142 aa). The interval 296 to 299 is competitively blocks access of APC substrates to the D-box coreceptor formed by FZR1 and ANAPC10; the sequence is RAAL. The ZBR-type zinc-finger motif lies at 348 to 396; the sequence is SLKACVRCNFPAKYDHYLERAVCKRESCQFEYCTKCLCAYHNNKDCLNG. Zn(2+) is bound by residues Cys-352, Cys-355, Cys-370, Cys-375, Cys-380, Cys-383, His-388, and Cys-393. An allows a rapid multiple mono-ubiquitination of the APC substrate, but strongly inhibits the slow ubiquitin chain elongation catalyzed by UBCH10 region spans residues 352–394; the sequence is CVRCNFPAKYDHYLERAVCKRESCQFEYCTKCLCAYHNNKDCL. A sufficient to suppress UBE2S activity; essential for interaction with UBE2S; competitively inhibits the rapide ubiquitin chain elongation by UBE2D1 which blocks UBE2D1 with APC; indispensable for recruitment and position of FBXO5 to the catalytic site of APC; abrogates the inhibition of ubiquitin chain assembly primarily catalyzed by UBE2S; inhibits the ubiquitination by either UBE2C or UBE2D1 region spans residues 411-421; sequence TKKSKKNLQRL.

As to quaternary structure, part of a SCF (SKP1-cullin-F-box) protein ligase complex. Interacts with BTRC; mediates proteolysis by the SCF ubiquitin ligase complex leading to activation of APC in late mitosis and subsequent mitotic progression. Interacts with FZR1/CDH1 and the N-terminal substrate-binding domain of CDC20; prevents APC activation. Also interacts with EVI5 which blocks its phosphorylation by PLK1 and prevents its subsequent binding to BTRC and degradation. Interacts simultaneously with anaphase promoting complex (APC), through at least ANAPC2, CDC23, CDC27, the APC substrate GMNN and the APC activator FZR1. Interacts with UBE2S; interferes with the activity of UBE2S mainly by disrupting the dynamic electrostatic association between the C-terminal tail of UBE2S and ANAPC2. Interacts with RPS6KA2; cooperates to induce the metaphase arrest of early blastomeres; increases and stabilizes interaction of FBXO5 with CDC20. Post-translationally, phosphorylation by CDK2 and subsequently by PLK1 triggers degradation during early mitosis through ubiquitin-mediated proteolysis by the SCF ubiquitin ligase complex containing the F-box protein BTRC. This degradation is necessary for the activation of APC in late mitosis and subsequent mitotic progression. Phosphorylated by RPS6KA2; increases and stabilizes interaction with CDC20. In terms of processing, ubiquitinated by the SCF(BTRC) complex following phosphorylation by PLK1. Undergoes both 'Lys-11' and 'Lys-48'-linked polyubiquitination by APC-FZR1 complex leading to degradation during G1 phase by the proteasome. Degraded through the SCF(BTRC) complex; degradation occurs during oocyte maturation, between germinal vesicle breakdown (GVBD) and meiosis I, and is required for the meiosis I-meiosis II transition. Expressed in oocytes and granulosa cells. Expressed in proliferating cells compartments in hair follicle and skin epidermis, spermatogonia, and intestinal crypts.

It localises to the nucleus. It is found in the cytoplasm. Its subcellular location is the cytoskeleton. The protein localises to the spindle. The protein operates within protein modification; protein ubiquitination. Functionally, regulator of APC activity during mitotic and meiotic cell cycle. During mitotic cell cycle plays a role as both substrate and inhibitor of APC-FZR1 complex. During G1 phase, plays a role as substrate of APC-FZR1 complex E3 ligase. Then switches as an inhibitor of APC-FZR1 complex during S and G2 leading to cell-cycle commitment. As APC inhibitor, prevents the degradation of APC substrates at multiple levels: by interacting with APC and blocking access of APC substrates to the D-box co-receptor, formed by FZR1 and ANAPC10; by suppressing ubiquitin ligation and chain elongation by APC by preventing the UBE2C and UBE2S activities. Plays a role in genome integrity preservation by coordinating DNA replication with mitosis through APC inhibition in interphase to stabilize CCNA2 and GMNN in order to promote mitosis and prevent rereplication and DNA damage-induced cellular senescence. During oocyte maturation, plays a role in meiosis through inactivation of APC-FZR1 complex. Inhibits APC through RPS6KA2 interaction that increases FBXO5 affiniy for CDC20 leading to the metaphase arrest of the second meiotic division before fertilization. Controls entry into the first meiotic division through inactivation of APC-FZR1 complex. Promotes migration and osteogenic differentiation of mesenchymal stem cells. In Mus musculus (Mouse), this protein is F-box only protein 5.